The chain runs to 955 residues: Thyroid hormone receptor-associated protein 3 (955 aa).

The disordered stretch occupies residues 1–94; it reads MSKTNKSKSG…YFRGRNRGFY (94 aa). Ser-2 is modified (N-acetylserine). Residues 2–190 form a required for mRNA splicing activation region; that stretch reads SKTNKSKSGS…KSSSKDSRPS (189 aa). Residues 14–51 are compositionally biased toward basic residues; it reads SRSRSASRSRSRSFSKSRSRSRSLSRSRKRRLSSRSRS. Arg-17 carries the post-translational modification Dimethylated arginine. Residues 58–75 show a composition bias toward basic and acidic residues; sequence HNRERNHPRVYQNRDFRG. The residue at position 66 (Arg-66) is an Asymmetric dimethylarginine. Positions 82-94 are enriched in low complexity; sequence RPYYFRGRNRGFY. 2 positions are modified to asymmetric dimethylarginine: Arg-101 and Arg-108. Residues 117-559 are disordered; that stretch reads AYSPRRGRSR…AKGDFPTGKS (443 aa). The segment covering 121-143 has biased composition (basic residues); the sequence is RRGRSRSRSPKRRSPSPRSRSHS. Over residues 144–155 the composition is skewed to basic and acidic residues; it reads RNSDKSSSDRSR. Residues 157–166 are compositionally biased toward low complexity; the sequence is SSSSRSSSNH. The span at 167 to 188 shows a compositional bias: basic and acidic residues; it reads SRVESSKRKSAKEKKSSSKDSR. Lys-202 participates in a covalent cross-link: Glycyl lysine isopeptide (Lys-Gly) (interchain with G-Cter in SUMO1); alternate. Lys-202 is covalently cross-linked (Glycyl lysine isopeptide (Lys-Gly) (interchain with G-Cter in SUMO2); alternate). Polar residues predominate over residues 204–220; that stretch reads QTFSGGTSQDTKASESS. Residue Lys-215 forms a Glycyl lysine isopeptide (Lys-Gly) (interchain with G-Cter in SUMO2) linkage. The residue at position 220 (Ser-220) is a Phosphoserine. A Glycyl lysine isopeptide (Lys-Gly) (interchain with G-Cter in SUMO2); alternate cross-link involves residue Lys-221. Residue Lys-221 is modified to N6-acetyllysine; alternate. Ser-232, Ser-237, Ser-240, Ser-243, and Ser-248 each carry phosphoserine. Lys-252 is covalently cross-linked (Glycyl lysine isopeptide (Lys-Gly) (interchain with G-Cter in SUMO2); alternate). Lys-252 carries the N6-methyllysine; alternate modification. 2 positions are modified to phosphoserine: Ser-253 and Ser-257. A compositionally biased stretch (pro residues) spans 266–276; it reads RPSPVPKPSPP. Over residues 282 to 300 the composition is skewed to polar residues; that stretch reads QMGSTLPSGAGYQSGTHQG. The segment covering 305-331 has biased composition (low complexity); sequence GSGSLSPSKKSPVGKSPPSTGSTYGSS. Ser-315, Ser-320, and Ser-323 each carry phosphoserine. Residue Thr-324 is modified to Phosphothreonine. The residue at position 326 (Ser-326) is a Phosphoserine. At Tyr-328 the chain carries Phosphotyrosine. Residue Lys-333 forms a Glycyl lysine isopeptide (Lys-Gly) (interchain with G-Cter in SUMO2) linkage. At Ser-339 the chain carries Phosphoserine. Residue Lys-346 forms a Glycyl lysine isopeptide (Lys-Gly) (interchain with G-Cter in SUMO2); alternate linkage. At Lys-346 the chain carries N6-acetyllysine; alternate. A compositionally biased stretch (basic and acidic residues) spans 347 to 377; that stretch reads RYLEEQKTENGKDKEQKQTNTDKEKIKEKGS. Glycyl lysine isopeptide (Lys-Gly) (interchain with G-Cter in SUMO2) cross-links involve residues Lys-353 and Lys-375. Residues 359 to 955 form a required for mRNA decay activity region; it reads DKEQKQTNTD…EKDNIQPTTE (597 aa). Ser-377 and Ser-379 each carry phosphoserine. Lys-387 is covalently cross-linked (Glycyl lysine isopeptide (Lys-Gly) (interchain with G-Cter in SUMO1); alternate). Lys-387 is covalently cross-linked (Glycyl lysine isopeptide (Lys-Gly) (interchain with G-Cter in SUMO2); alternate). Glycyl lysine isopeptide (Lys-Gly) (interchain with G-Cter in SUMO2) cross-links involve residues Lys-389 and Lys-396. Thr-397 is subject to Phosphothreonine. A Glycyl lysine isopeptide (Lys-Gly) (interchain with G-Cter in SUMO2) cross-link involves residue Lys-401. Phosphoserine is present on residues Ser-406 and Ser-408. Over residues 414–452 the composition is skewed to basic and acidic residues; the sequence is LRDDFEKKMADFHKEEMDDQDKDKAKGRKESEFDDEPKF. Glycyl lysine isopeptide (Lys-Gly) (interchain with G-Cter in SUMO2) cross-links involve residues Lys-421 and Lys-427. Ser-444 carries the post-translational modification Phosphoserine. Lys-451 is covalently cross-linked (Glycyl lysine isopeptide (Lys-Gly) (interchain with G-Cter in SUMO1); alternate). Glycyl lysine isopeptide (Lys-Gly) (interchain with G-Cter in SUMO2); alternate cross-links involve residues Lys-451 and Lys-455. Lys-455 is modified (N6-acetyllysine; alternate). Residues Lys-461 and Lys-467 each participate in a glycyl lysine isopeptide (Lys-Gly) (interchain with G-Cter in SUMO2) cross-link. Ser-468 bears the Phosphoserine mark. Residues Lys-470 and Lys-481 each participate in a glycyl lysine isopeptide (Lys-Gly) (interchain with G-Cter in SUMO2); alternate cross-link. 2 positions are modified to N6-acetyllysine; alternate: Lys-470 and Lys-481. A Glycyl lysine isopeptide (Lys-Gly) (interchain with G-Cter in SUMO2) cross-link involves residue Lys-486. A compositionally biased stretch (basic and acidic residues) spans 495 to 521; sequence FPERSKKEDRGKRSEGGHRGFVPEKNF. Residue Lys-519 is modified to N6-acetyllysine. Residue Lys-527 forms a Glycyl lysine isopeptide (Lys-Gly) (interchain with G-Cter in SUMO2); alternate linkage. Lys-527 bears the N6-acetyllysine; alternate mark. Ser-535 bears the Phosphoserine mark. The segment covering 540 to 550 has biased composition (basic and acidic residues); that stretch reads KTSESRDKLGA. Lys-551 participates in a covalent cross-link: Glycyl lysine isopeptide (Lys-Gly) (interchain with G-Cter in SUMO2). 552–559 serves as a coordination point for ATP; it reads GDFPTGKS. Lys-558 participates in a covalent cross-link: Glycyl lysine isopeptide (Lys-Gly) (interchain with G-Cter in SUMO2); alternate. At Lys-558 the chain carries N6-acetyllysine; alternate. Phosphoserine is present on residues Ser-560, Ser-562, and Ser-575. Lys-602 is covalently cross-linked (Glycyl lysine isopeptide (Lys-Gly) (interchain with G-Cter in SUMO2)). Phosphoserine occurs at positions 619, 622, 672, 682, and 684. A compositionally biased stretch (basic and acidic residues) spans 663 to 680; sequence EQEAAKNKKSPEIHRRID. Residues 663 to 955 are disordered; the sequence is EQEAAKNKKS…EKDNIQPTTE (293 aa). Positions 691–761 are enriched in basic and acidic residues; that stretch reads LAHDEMKSPR…RSAEKTEKTH (71 aa). Residue Lys-697 forms a Glycyl lysine isopeptide (Lys-Gly) (interchain with G-Cter in SUMO2) linkage. Ser-698 carries the phosphoserine modification. Residues Lys-705, Lys-709, Lys-711, Lys-756, and Lys-759 each participate in a glycyl lysine isopeptide (Lys-Gly) (interchain with G-Cter in SUMO2) cross-link. A compositionally biased stretch (basic residues) spans 762–775; it reads KGSKKQKKHRRARD. A compositionally biased stretch (low complexity) spans 779–789; the sequence is SSSSSSQSSHS. N6-acetyllysine is present on Lys-811. At Arg-845 the chain carries Asymmetric dimethylarginine. Positions 848 to 859 are enriched in low complexity; it reads YSGNNNNNSNND. Residue Thr-874 is modified to Phosphothreonine. Residues Lys-876 and Lys-879 each participate in a glycyl lysine isopeptide (Lys-Gly) (interchain with G-Cter in SUMO2) cross-link. Over residues 881-895 the composition is skewed to basic and acidic residues; sequence YLHDDREGEGSDKWV. 2 positions are modified to phosphoserine: Ser-928 and Ser-939. The segment covering 930 to 940 has biased composition (acidic residues); that stretch reads EEGEIEDDESG.

It belongs to the BCLAF1/THRAP3 family. As to quaternary structure, associated with the large multiprotein complex TRAP (Mediator complex-like). Interacts with SFPQ; the interaction is dependent on SFPQ phosphorylation at 'Thr-687' and inhibits binding of SFPQ to an ESS1 exonic splicing silencer element-containing RNA. Interacts with NXF1. Component of the SNARP complex which consists at least of SNIP1, SNW1, THRAP3, BCLAF1 and PNN. Associated with spliced mRNP complexes. Interacts with HELZ2 and PPARG. Interacts with CLOCK and BMAL1. Component of a MACOM-like complex, named WTAP complex, composed of WTAP, ZC3H13, CBLL1, KIAA1429, RBM15, BCLAF1 and THRAP3. Post-translationally, ADP-ribosylation during genotoxic stress promotes accumulation in nuclear speckles. In terms of tissue distribution, ubiquitous.

It is found in the nucleus. The protein localises to the nucleoplasm. It localises to the nucleus speckle. Functionally, involved in pre-mRNA splicing. Remains associated with spliced mRNA after splicing which probably involves interactions with the exon junction complex (EJC). Can trigger mRNA decay which seems to be independent of nonsense-mediated decay involving premature stop codons (PTC) recognition. May be involved in nuclear mRNA decay. Involved in regulation of signal-induced alternative splicing. During splicing of PTPRC/CD45 is proposed to sequester phosphorylated SFPQ from PTPRC/CD45 pre-mRNA in resting T-cells. Involved in cyclin-D1/CCND1 mRNA stability probably by acting as component of the SNARP complex which associates with both the 3'end of the CCND1 gene and its mRNA. Involved in response to DNA damage. Is excluced from DNA damage sites in a manner that parallels transcription inhibition; the function may involve the SNARP complex. Initially thought to play a role in transcriptional coactivation through its association with the TRAP complex; however, it is not regarded as a stable Mediator complex subunit. Cooperatively with HELZ2, enhances the transcriptional activation mediated by PPARG, maybe through the stabilization of the PPARG binding to DNA in presence of ligand. May play a role in the terminal stage of adipocyte differentiation. Plays a role in the positive regulation of the circadian clock. Acts as a coactivator of the CLOCK-BMAL1 heterodimer and promotes its transcriptional activator activity and binding to circadian target genes. The sequence is that of Thyroid hormone receptor-associated protein 3 from Homo sapiens (Human).